Consider the following 482-residue polypeptide: Ubiquitin carboxyl-terminal hydrolase MINDY-1 (482 aa).

The segment at 1–119 (MEQPQAECPA…RPQQLPQSPR (119 aa)) is disordered. A compositionally biased stretch (basic and acidic residues) spans 21-66 (ESEKHEALSGPEKHPQDKDGADAAPEKHPQDKDGADAHGEAGKQKS). Pro residues predominate over residues 82 to 94 (CPPPEASSSPPGP). A compositionally biased stretch (polar residues) spans 106–119 (EACSRPQQLPQSPR). Serine 117 is modified (phosphoserine). The active-site Nucleophile is the cysteine 151. The active-site Proton acceptor is histidine 333. The segment at 402 to 441 (QVDQDYLIALSLQQQQQPQGMLGLSDLELAQQLQQEEYQQ) is ubiquitin-binding domain (UBD). Positions 437-446 (EEYQQQQAVQ) are enriched in low complexity. A disordered region spans residues 437 to 482 (EEYQQQQAVQPVRTRAPSSPGRGATSGRPAGERRQRSKTESDCVLL). Serine 454 bears the Phosphoserine mark. Basic and acidic residues predominate over residues 466–482 (AGERRQRSKTESDCVLL).

It belongs to the MINDY deubiquitinase family. FAM63 subfamily.

The enzyme catalyses Thiol-dependent hydrolysis of ester, thioester, amide, peptide and isopeptide bonds formed by the C-terminal Gly of ubiquitin (a 76-residue protein attached to proteins as an intracellular targeting signal).. Hydrolase that can specifically remove 'Lys-48'-linked conjugated ubiquitin from proteins. Has exodeubiquitinase activity and has a preference for long polyubiquitin chains. May play a regulatory role at the level of protein turnover. In Rattus norvegicus (Rat), this protein is Ubiquitin carboxyl-terminal hydrolase MINDY-1 (Mindy1).